Here is a 1670-residue protein sequence, read N- to C-terminus: Hemolymph clottable protein (1670 aa).

The N-terminal stretch at 1 to 14 (MKALILLLLGACQA) is a signal peptide. Residues 15–674 (LQPGLEYQYR…FANFVTTTIY (660 aa)) form a vittelogenin region. The Vitellogenin domain maps to 15-764 (LQPGLEYQYR…LKIDGQQRGL (750 aa)). Asn-106 carries N-linked (GlcNAc...) asparagine glycosylation. Positions 198-231 (SSYTTKTKSKTSSKTSSKTSSKTSSKTSKTGKTS) are enriched in low complexity. The segment at 198-236 (SSYTTKTKSKTSSKTSSKTSSKTSSKTSKTGKTSPGQLA) is disordered. N-linked (GlcNAc...) asparagine glycosylation is found at Asn-319, Asn-459, and Asn-1301. Residues 1390 to 1550 (VSCTIDETKV…SWASPGEGCA (161 aa)) enclose the VWFD domain. 2 disulfide bridges follow: Cys-1392-Cys-1513 and Cys-1414-Cys-1549.

In terms of assembly, homodimer; disulfide-linked. Also exists as oligomers. Glycosylated. Contains mannose and N-acetylglucosamine. In terms of processing, substrate of transglutaminase. As to expression, widely expressed with highest levels in gill and heart. Not expressed in hemocytes.

The protein resides in the secreted. In terms of biological role, forms stable clots in the presence of calcium. This chain is Hemolymph clottable protein, found in Penaeus monodon (Giant tiger prawn).